Here is a 100-residue protein sequence, read N- to C-terminus: U-myrmeciitoxin(01)-Mg7c (100 aa).

Positions 1–17 are cleaved as a signal peptide; it reads MKLSYLSLALAIILVLA. The propeptide occupies 18–50; that stretch reads IVYSPHMEVKALADAEPDAIGFADAFGEADAEP. Residue S85 is glycosylated (O-linked (GalNAc...) serine). T94 and T95 each carry an O-linked (GalNAc...) threonine glycan.

Belongs to the formicidae venom precursor-01 superfamily. Post-translationally, glycosylation is critical to maintaining the aqueous solubility of this protein, but does not directly contribute to its activity. As to expression, expressed by the venom gland.

Its subcellular location is the secreted. The protein localises to the target cell membrane. Functionally, neurotoxin that triggers pain behavior and inflammation in mammals, and is paralytic and lethal to insects. Causes a time-dependent increase in cell leak current. May act by targeting membranes. This chain is U-myrmeciitoxin(01)-Mg7c, found in Myrmecia gulosa (Red bulldog ant).